We begin with the raw amino-acid sequence, 54 residues long: Relaxin (54 aa).

Residue Q1 is modified to Pyrrolidone carboxylic acid. 3 disulfide bridges follow: C10-C41, C22-C54, and C40-C45.

Belongs to the insulin family. As to quaternary structure, heterodimer of a B chain and an A chain linked by two disulfide bonds.

It is found in the secreted. Its function is as follows. Relaxin is an ovarian hormone that acts with estrogen to produce dilatation of the birth canal in many mammals. In Balaenoptera acutorostrata (Common minke whale), this protein is Relaxin.